We begin with the raw amino-acid sequence, 120 residues long: Peptidyl-tRNA hydrolase (120 aa).

The protein belongs to the PTH2 family.

The protein resides in the cytoplasm. The catalysed reaction is an N-acyl-L-alpha-aminoacyl-tRNA + H2O = an N-acyl-L-amino acid + a tRNA + H(+). Its function is as follows. The natural substrate for this enzyme may be peptidyl-tRNAs which drop off the ribosome during protein synthesis. In Pyrobaculum aerophilum (strain ATCC 51768 / DSM 7523 / JCM 9630 / CIP 104966 / NBRC 100827 / IM2), this protein is Peptidyl-tRNA hydrolase.